The sequence spans 318 residues: NADH-ubiquinone oxidoreductase chain 1 (318 aa).

Transmembrane regions (helical) follow at residues 1–21 (MLPITNSLTYIIPILIAVAFL), 71–91 (LLILSPILALTTAMLIWTPIP), 101–121 (LGLLSILAISSMAVNSTLWAG), 145–165 (VTLGIILLSILILTGGFTMQL), 172–192 (HIWLLTTSWPLTMMWFISTLA), 224–244 (FFLAEYTNIISMNLLTCIMFI), 253–273 (ELFLINLVTKTLLLSLTFLWI), and 294–314 (LPLTMALCLLQASLLVSISGI).

The protein belongs to the complex I subunit 1 family.

It localises to the mitochondrion inner membrane. The catalysed reaction is a ubiquinone + NADH + 5 H(+)(in) = a ubiquinol + NAD(+) + 4 H(+)(out). Its function is as follows. Core subunit of the mitochondrial membrane respiratory chain NADH dehydrogenase (Complex I) that is believed to belong to the minimal assembly required for catalysis. Complex I functions in the transfer of electrons from NADH to the respiratory chain. The immediate electron acceptor for the enzyme is believed to be ubiquinone. This Varanus rudicollis (Rough-necked monitor lizard) protein is NADH-ubiquinone oxidoreductase chain 1 (MT-ND1).